Consider the following 127-residue polypeptide: Aspartate 1-decarboxylase (127 aa).

Catalysis depends on S25, which acts as the Schiff-base intermediate with substrate; via pyruvic acid. S25 carries the pyruvic acid (Ser) modification. Residue T57 participates in substrate binding. Y58 (proton donor) is an active-site residue. Position 73–75 (73–75 (GAA)) interacts with substrate.

Belongs to the PanD family. In terms of assembly, heterooctamer of four alpha and four beta subunits. The cofactor is pyruvate. Is synthesized initially as an inactive proenzyme, which is activated by self-cleavage at a specific serine bond to produce a beta-subunit with a hydroxyl group at its C-terminus and an alpha-subunit with a pyruvoyl group at its N-terminus.

The protein resides in the cytoplasm. It catalyses the reaction L-aspartate + H(+) = beta-alanine + CO2. It participates in cofactor biosynthesis; (R)-pantothenate biosynthesis; beta-alanine from L-aspartate: step 1/1. Catalyzes the pyruvoyl-dependent decarboxylation of aspartate to produce beta-alanine. This chain is Aspartate 1-decarboxylase, found in Carboxydothermus hydrogenoformans (strain ATCC BAA-161 / DSM 6008 / Z-2901).